The primary structure comprises 480 residues: Endothelial transcription factor GATA-2 (480 aa).

Serine 73 carries the post-translational modification Phosphoserine. Position 86 is an asymmetric dimethylarginine (arginine 86). Residues 166–208 (SGSHLFGFPPTPPKEVSPDPSTTGAASPASPSAGGSVARGEDK) are disordered. The segment covering 183–201 (PDPSTTGAASPASPSAGGS) has biased composition (low complexity). Serine 192 is subject to Phosphoserine. 2 GATA-type zinc fingers span residues 295–319 (CVNCGATATPLWRRDGTGHYLCNAC) and 349–373 (CANCQTTTTTLWRRNANGDPVCNAC). Lysine 389 is covalently cross-linked (Glycyl lysine isopeptide (Lys-Gly) (interchain with G-Cter in SUMO2)). Residues 457-480 (TPIHPSSSLSFGHPHPSSMVTAMG) are disordered.

In terms of assembly, interacts with BRD3. Interacts with AR and CCAR1. Interacts with MDFIC.

The protein localises to the nucleus. In terms of biological role, transcriptional activator which regulates endothelin-1 gene expression in endothelial cells. Binds to the consensus sequence 5'-AGATAG-3'. Plays an important role in the regulation of phagocytosis in alveolar macrophages, particularly during P.carinii infection. This Rattus norvegicus (Rat) protein is Endothelial transcription factor GATA-2.